The following is a 293-amino-acid chain: Epimerase family protein SDR39U1 (293 aa).

NADP(+)-binding positions include 31–32, 58–59, glutamate 77, arginine 82, and valine 160; these read SR and LA.

This sequence belongs to the NAD(P)-dependent epimerase/dehydratase family. SDR39U1 subfamily. As to expression, expressed in adrenal gland.

In terms of biological role, putative NADP-dependent oxidoreductase. In Homo sapiens (Human), this protein is Epimerase family protein SDR39U1 (SDR39U1).